The sequence spans 186 residues: Alkyl hydroperoxide reductase AhpD (186 aa).

Residue Cys132 is the Proton donor of the active site. Cys132 and Cys135 are oxidised to a cystine. Cys135 functions as the Cysteine sulfenic acid (-SOH) intermediate in the catalytic mechanism.

It belongs to the AhpD family.

The enzyme catalyses N(6)-[(R)-dihydrolipoyl]-L-lysyl-[lipoyl-carrier protein] + a hydroperoxide = N(6)-[(R)-lipoyl]-L-lysyl-[lipoyl-carrier protein] + an alcohol + H2O. Antioxidant protein with alkyl hydroperoxidase activity. Required for the reduction of the AhpC active site cysteine residues and for the regeneration of the AhpC enzyme activity. In Anaeromyxobacter sp. (strain K), this protein is Alkyl hydroperoxide reductase AhpD.